A 190-amino-acid polypeptide reads, in one-letter code: Shikimate kinase (190 aa).

22–27 (GSGKST) is a binding site for ATP. Position 26 (S26) interacts with Mg(2+). Residues D44, R68, and G90 each coordinate substrate. Residue R127 coordinates ATP. R146 provides a ligand contact to substrate.

Belongs to the shikimate kinase family. As to quaternary structure, monomer. It depends on Mg(2+) as a cofactor.

The protein localises to the cytoplasm. It carries out the reaction shikimate + ATP = 3-phosphoshikimate + ADP + H(+). It participates in metabolic intermediate biosynthesis; chorismate biosynthesis; chorismate from D-erythrose 4-phosphate and phosphoenolpyruvate: step 5/7. Functionally, catalyzes the specific phosphorylation of the 3-hydroxyl group of shikimic acid using ATP as a cosubstrate. This Microcystis aeruginosa (strain NIES-843 / IAM M-2473) protein is Shikimate kinase.